The chain runs to 369 residues: Serine proteinase inhibitor 1 (369 aa).

This sequence belongs to the serpin family. Poxviruses subfamily.

In terms of biological role, important in virulence. The sequence is that of Serine proteinase inhibitor 1 (SPI-1) from Oryctolagus cuniculus (Rabbit).